A 678-amino-acid polypeptide reads, in one-letter code: uncharacterized protein (678 aa).

This is an uncharacterized protein from Ostreid herpesvirus 1 (isolate France) (OsHV-1).